The chain runs to 156 residues: ATP synthase subunit b (156 aa).

Residues 11-31 traverse the membrane as a helical segment; sequence AIAFVLFVLFCMKYIWPPIMA.

This sequence belongs to the ATPase B chain family. F-type ATPases have 2 components, F(1) - the catalytic core - and F(0) - the membrane proton channel. F(1) has five subunits: alpha(3), beta(3), gamma(1), delta(1), epsilon(1). F(0) has three main subunits: a(1), b(2) and c(10-14). The alpha and beta chains form an alternating ring which encloses part of the gamma chain. F(1) is attached to F(0) by a central stalk formed by the gamma and epsilon chains, while a peripheral stalk is formed by the delta and b chains.

Its subcellular location is the cell inner membrane. F(1)F(0) ATP synthase produces ATP from ADP in the presence of a proton or sodium gradient. F-type ATPases consist of two structural domains, F(1) containing the extramembraneous catalytic core and F(0) containing the membrane proton channel, linked together by a central stalk and a peripheral stalk. During catalysis, ATP synthesis in the catalytic domain of F(1) is coupled via a rotary mechanism of the central stalk subunits to proton translocation. In terms of biological role, component of the F(0) channel, it forms part of the peripheral stalk, linking F(1) to F(0). This is ATP synthase subunit b from Yersinia enterocolitica serotype O:8 / biotype 1B (strain NCTC 13174 / 8081).